The sequence spans 605 residues: Xylan O-acetyltransferase 7 (605 aa).

At 1–124 (MKKKKNGMGA…AKQPSPRRTP (124 aa)) the chain is on the cytoplasmic side. A disordered region spans residues 86–126 (PCHLLPIQGQGQMQMQQRRKPPPAAAPVAAKQPSPRRTPGP). A helical; Signal-anchor for type II membrane protein transmembrane segment spans residues 125 to 145 (GPLSFAGALLSLLVVATFLYI). The Lumenal segment spans residues 146 to 605 (NDHGNMMPPH…LYAHIVAHAA (460 aa)). Asn-192 and Asn-218 each carry an N-linked (GlcNAc...) asparagine glycan. Cystine bridges form between Cys-243/Cys-296, Cys-267/Cys-332, Cys-276/Cys-584, and Cys-499/Cys-580. The GDS motif signature appears at 319 to 321 (GDS). Ser-321 serves as the catalytic Nucleophile. N-linked (GlcNAc...) asparagine glycans are attached at residues Asn-351, Asn-363, Asn-471, and Asn-508. The active-site Proton donor is the Asp-579. A DXXH motif motif is present at residues 579–582 (DCIH). The Proton acceptor role is filled by His-582.

Belongs to the PC-esterase family. TBL subfamily. In terms of tissue distribution, expressed in roots, leaves and stems.

Its subcellular location is the golgi apparatus membrane. Its function is as follows. Xylan acetyltransferase required for 2-O- and 3-O-monoacetylation of xylosyl residues in xylan. Catalyzes the 2-O-acetylation of xylan, followed by nonenzymatic acetyl migration to the O-3 position, resulting in products that are monoacetylated at both O-2 and O-3 positions. This is Xylan O-acetyltransferase 7 from Oryza sativa subsp. japonica (Rice).